The following is a 77-amino-acid chain: Acyl carrier protein (77 aa).

A Carrier domain is found at 2–77 (SDIADRVKKI…DAVKFIQGAV (76 aa)). An O-(pantetheine 4'-phosphoryl)serine modification is found at S37.

It belongs to the acyl carrier protein (ACP) family. 4'-phosphopantetheine is transferred from CoA to a specific serine of apo-ACP by AcpS. This modification is essential for activity because fatty acids are bound in thioester linkage to the sulfhydryl of the prosthetic group.

It is found in the cytoplasm. It functions in the pathway lipid metabolism; fatty acid biosynthesis. Its function is as follows. Carrier of the growing fatty acid chain in fatty acid biosynthesis. This Paracoccus denitrificans (strain Pd 1222) protein is Acyl carrier protein.